Reading from the N-terminus, the 448-residue chain is MVNSEEIADGFEPKPVSRSYSGDSSHDRSLSDLNHAAEDLSDKLKNVGLNEVTKEQSEKMMSVSESNGGLDSNAVVTINQEEEEEEEDRDGYGYGDGWSENESENVYPVRPGAEDCSFYMRTGSCKFGSSCKFNHPLARKFQIARDNKVREKEDDGGKLGLIDCKYYFRTGGCKYGETCRFNHTIPKSGLASAPELNFLGLPLRPGEVECPYYMRNGSCKYGAECKFNHPDPTTIGGTDSPSFRGNNGVSIGTFSPKATFQASSTSWSSPRHVNGTSPFIPVMLSQTHGVTSQNPEWNGYQASVYSSERGVFSPSTTYLMNNSSAETSMLLSQYRHQMPAEEFPERPDQPECSYYMKTGDCKFKFNCKYHHPKNRLPKLPPYALNDKGLPLRPDQNICTYYSRYGICKFGPACRFDHSVQPPYSTESSQAIVEPPQVSANGNESDGWN.

The interval 1–106 is disordered; it reads MVNSEEIADG…GWSENESENV (106 aa). The span at 24-45 shows a compositional bias: basic and acidic residues; sequence SSHDRSLSDLNHAAEDLSDKLK. Residues 63–79 are compositionally biased toward polar residues; that stretch reads VSESNGGLDSNAVVTIN. Residues 80-89 are compositionally biased toward acidic residues; that stretch reads QEEEEEEEDR. C3H1-type zinc fingers lie at residues 110–138, 158–186, 204–232, 346–374, and 392–420; these read RPGA…HPLA, KLGL…HTIP, RPGE…HPDP, RPDQ…HPKN, and RPDQ…HSVQ. Positions 424–448 are disordered; that stretch reads STESSQAIVEPPQVSANGNESDGWN. Over residues 437–448 the composition is skewed to polar residues; it reads VSANGNESDGWN.

The protein resides in the nucleus. The chain is Zinc finger CCCH domain-containing protein 43 from Arabidopsis thaliana (Mouse-ear cress).